The chain runs to 442 residues: MSKKVFIKTFGCQMNEYDSDKMADVLGAAQGYESTDDPEQADLILFNTCSVREKAQEKVFSDLGRYKHLKERGVLIGVGGCVASQEGEEIIKRAPYVDVVFGPQTLHRLPELLNARAAKHKPQVDISFPEIEKFDHLPPARVEGSSAFVSIMEGCSKYCSYCVVPYTRGEEVSRPFEDVLIEVAGLADQGVKEVTLLGQNVNAYLGKMGDTAEIADFALLLEYVSEIPGIERIRYTTSHPNEFTPRLIEAYARLPKLVSHLHLPVQHGSDKILMAMKRGYTAMEYKSTIRKLRAIRPEMAMSSDFIVGFPGETEEDFQKMMKLIHDVRFDNSFSFIFSPRPGTPAANLHDDTPHEVKLRRLQELQAVINNNIKDISDERVGTVQRLLVEGLSKRDGSELMGRTECNRVVNFPGNERLIGQMIDVKITEARTFTLRGEVVVRH.

Positions 3–118 (KKVFIKTFGC…LPELLNARAA (116 aa)) constitute an MTTase N-terminal domain. [4Fe-4S] cluster-binding residues include Cys12, Cys49, Cys81, Cys155, Cys159, and Cys162. The Radical SAM core domain maps to 141–374 (RVEGSSAFVS…QAVINNNIKD (234 aa)). The TRAM domain occupies 377–440 (DERVGTVQRL…TFTLRGEVVV (64 aa)).

This sequence belongs to the methylthiotransferase family. MiaB subfamily. In terms of assembly, monomer. [4Fe-4S] cluster is required as a cofactor.

The protein localises to the cytoplasm. It catalyses the reaction N(6)-dimethylallyladenosine(37) in tRNA + (sulfur carrier)-SH + AH2 + 2 S-adenosyl-L-methionine = 2-methylsulfanyl-N(6)-dimethylallyladenosine(37) in tRNA + (sulfur carrier)-H + 5'-deoxyadenosine + L-methionine + A + S-adenosyl-L-homocysteine + 2 H(+). Its function is as follows. Catalyzes the methylthiolation of N6-(dimethylallyl)adenosine (i(6)A), leading to the formation of 2-methylthio-N6-(dimethylallyl)adenosine (ms(2)i(6)A) at position 37 in tRNAs that read codons beginning with uridine. This chain is tRNA-2-methylthio-N(6)-dimethylallyladenosine synthase, found in Delftia acidovorans (strain DSM 14801 / SPH-1).